The chain runs to 546 residues: Thermolysin (546 aa).

An N-terminal signal peptide occupies residues 1 to 25 (MDKRAMLGAIGLAFGLMAWPFGASA). Positions 26 to 228 (KEKSMVWNEQ…EAKPGGGQPV (203 aa)) are cleaved as a propeptide — activation peptide. Positions 287, 289, 291, and 368 each coordinate Ca(2+). His-372 is a Zn(2+) binding site. Glu-373 is an active-site residue. Residues His-376 and Glu-396 each contribute to the Zn(2+) site. Residues Asn-413, Asp-415, Glu-417, Glu-420, Tyr-423, Thr-424, Ile-427, and Asp-430 each contribute to the Ca(2+) site. His-461 acts as the Proton donor in catalysis.

The protein belongs to the peptidase M4 family. It depends on Ca(2+) as a cofactor. Zn(2+) serves as cofactor.

It is found in the secreted. The catalysed reaction is Preferential cleavage: Xaa-|-Leu &gt; Xaa-|-Phe.. In terms of biological role, extracellular zinc metalloprotease. The chain is Thermolysin (npr) from Bacillus caldolyticus.